We begin with the raw amino-acid sequence, 277 residues long: Knob-associated histidine-rich protein (277 aa).

Disordered stretches follow at residues 95-114 (DGSHGNLRGHDNKGSEGYGY) and 162-277 (SSVN…KKKK). Basic and acidic residues-rich tracts occupy residues 169-190 (KHGDEKHHSSKKHEGNDGEGEK) and 211-220 (KDNEDAESVK). Residues 221–237 (SKKHKSHDCEKKKSKKH) are compositionally biased toward basic residues. Basic and acidic residues-rich tracts occupy residues 238–259 (KDNEDAESVKSKKSVKEKGEKH) and 268–277 (KTNEEKKKKK).

It localises to the secreted. In terms of biological role, KAHRP might mimick human histidine-rich glycoproteins to anchor host thrombospondin or a parasite analog in a binding complex with the endothelial cell receptor. The polypeptide is Knob-associated histidine-rich protein (Plasmodium falciparum (isolate CDC / Honduras)).